Consider the following 263-residue polypeptide: Pyridoxine 5'-phosphate synthase (263 aa).

Residue N15 participates in 3-amino-2-oxopropyl phosphate binding. 17 to 18 (DH) contacts 1-deoxy-D-xylulose 5-phosphate. R26 is a binding site for 3-amino-2-oxopropyl phosphate. H51 serves as the catalytic Proton acceptor. R53 and H58 together coordinate 1-deoxy-D-xylulose 5-phosphate. The Proton acceptor role is filled by E78. T108 contributes to the 1-deoxy-D-xylulose 5-phosphate binding site. H199 functions as the Proton donor in the catalytic mechanism. Residues G200 and 221 to 222 (GH) each bind 3-amino-2-oxopropyl phosphate.

Belongs to the PNP synthase family. In terms of assembly, homooctamer; tetramer of dimers.

The protein resides in the cytoplasm. It carries out the reaction 3-amino-2-oxopropyl phosphate + 1-deoxy-D-xylulose 5-phosphate = pyridoxine 5'-phosphate + phosphate + 2 H2O + H(+). Its pathway is cofactor biosynthesis; pyridoxine 5'-phosphate biosynthesis; pyridoxine 5'-phosphate from D-erythrose 4-phosphate: step 5/5. In terms of biological role, catalyzes the complicated ring closure reaction between the two acyclic compounds 1-deoxy-D-xylulose-5-phosphate (DXP) and 3-amino-2-oxopropyl phosphate (1-amino-acetone-3-phosphate or AAP) to form pyridoxine 5'-phosphate (PNP) and inorganic phosphate. This Ralstonia nicotianae (strain ATCC BAA-1114 / GMI1000) (Ralstonia solanacearum) protein is Pyridoxine 5'-phosphate synthase.